A 416-amino-acid chain; its full sequence is Glutamyl-tRNA reductase (416 aa).

Substrate is bound by residues 51–54, serine 110, 115–117, and glutamine 121; these read TCNR and EPQ. Cysteine 52 (nucleophile) is an active-site residue. 190 to 195 lines the NADP(+) pocket; sequence GAGQTG.

Belongs to the glutamyl-tRNA reductase family. As to quaternary structure, homodimer.

It carries out the reaction (S)-4-amino-5-oxopentanoate + tRNA(Glu) + NADP(+) = L-glutamyl-tRNA(Glu) + NADPH + H(+). Its pathway is porphyrin-containing compound metabolism; protoporphyrin-IX biosynthesis; 5-aminolevulinate from L-glutamyl-tRNA(Glu): step 1/2. Catalyzes the NADPH-dependent reduction of glutamyl-tRNA(Glu) to glutamate 1-semialdehyde (GSA). The sequence is that of Glutamyl-tRNA reductase from Francisella tularensis subsp. holarctica (strain OSU18).